Reading from the N-terminus, the 217-residue chain is Adenylate kinase (217 aa).

10–15 (GAGKGT) provides a ligand contact to ATP. Residues 30–59 (STGDMLRAQIKAGTELGMKAKAIMDAGGLV) form an NMP region. AMP contacts are provided by residues T31, R36, 57–59 (GLV), 85–88 (GFPR), and Q92. The segment at 122–159 (GRRVHVASGRTYHVVFNPPKVAGKDDVTGEDLIQRDDD) is LID. ATP-binding positions include R123 and 132-133 (TY). AMP-binding residues include R156 and R167. G203 is a binding site for ATP.

This sequence belongs to the adenylate kinase family. In terms of assembly, monomer.

The protein resides in the cytoplasm. It carries out the reaction AMP + ATP = 2 ADP. It functions in the pathway purine metabolism; AMP biosynthesis via salvage pathway; AMP from ADP: step 1/1. Functionally, catalyzes the reversible transfer of the terminal phosphate group between ATP and AMP. Plays an important role in cellular energy homeostasis and in adenine nucleotide metabolism. This chain is Adenylate kinase, found in Thiobacillus denitrificans (strain ATCC 25259 / T1).